We begin with the raw amino-acid sequence, 60 residues long: MAVQQVKKSRSKRDMRRSHDSLTGPTLSTDKSTGELHLRHHVSPNGFYKGKKVVDTKSED.

The tract at residues 1 to 60 (MAVQQVKKSRSKRDMRRSHDSLTGPTLSTDKSTGELHLRHHVSPNGFYKGKKVVDTKSED) is disordered. A compositionally biased stretch (basic residues) spans 7 to 16 (KKSRSKRDMR).

This sequence belongs to the bacterial ribosomal protein bL32 family.

This Francisella philomiragia subsp. philomiragia (strain ATCC 25017 / CCUG 19701 / FSC 153 / O#319-036) protein is Large ribosomal subunit protein bL32.